The following is a 365-amino-acid chain: UDP-N-acetylglucosamine--N-acetylmuramyl-(pentapeptide) pyrophosphoryl-undecaprenol N-acetylglucosamine transferase (365 aa).

UDP-N-acetyl-alpha-D-glucosamine-binding positions include 10–12, asparagine 128, arginine 170, serine 199, isoleucine 250, and glutamine 295; that span reads TGG.

The protein belongs to the glycosyltransferase 28 family. MurG subfamily.

The protein resides in the cell inner membrane. The catalysed reaction is di-trans,octa-cis-undecaprenyl diphospho-N-acetyl-alpha-D-muramoyl-L-alanyl-D-glutamyl-meso-2,6-diaminopimeloyl-D-alanyl-D-alanine + UDP-N-acetyl-alpha-D-glucosamine = di-trans,octa-cis-undecaprenyl diphospho-[N-acetyl-alpha-D-glucosaminyl-(1-&gt;4)]-N-acetyl-alpha-D-muramoyl-L-alanyl-D-glutamyl-meso-2,6-diaminopimeloyl-D-alanyl-D-alanine + UDP + H(+). The protein operates within cell wall biogenesis; peptidoglycan biosynthesis. Functionally, cell wall formation. Catalyzes the transfer of a GlcNAc subunit on undecaprenyl-pyrophosphoryl-MurNAc-pentapeptide (lipid intermediate I) to form undecaprenyl-pyrophosphoryl-MurNAc-(pentapeptide)GlcNAc (lipid intermediate II). This chain is UDP-N-acetylglucosamine--N-acetylmuramyl-(pentapeptide) pyrophosphoryl-undecaprenol N-acetylglucosamine transferase, found in Pelodictyon phaeoclathratiforme (strain DSM 5477 / BU-1).